We begin with the raw amino-acid sequence, 529 residues long: Peptide chain release factor 3 (529 aa).

One can recognise a tr-type G domain in the interval 7-275 (EQRRTFGIIS…AVVELAPSPR (269 aa)). Residues 16–23 (SHPDAGKT), 84–88 (DTPGH), and 138–141 (NKLD) each bind GTP.

Belongs to the TRAFAC class translation factor GTPase superfamily. Classic translation factor GTPase family. PrfC subfamily.

Its subcellular location is the cytoplasm. Increases the formation of ribosomal termination complexes and stimulates activities of RF-1 and RF-2. It binds guanine nucleotides and has strong preference for UGA stop codons. It may interact directly with the ribosome. The stimulation of RF-1 and RF-2 is significantly reduced by GTP and GDP, but not by GMP. In Syntrophus aciditrophicus (strain SB), this protein is Peptide chain release factor 3.